We begin with the raw amino-acid sequence, 142 residues long: ATP synthase epsilon chain (142 aa).

Belongs to the ATPase epsilon chain family. As to quaternary structure, F-type ATPases have 2 components, CF(1) - the catalytic core - and CF(0) - the membrane proton channel. CF(1) has five subunits: alpha(3), beta(3), gamma(1), delta(1), epsilon(1). CF(0) has three main subunits: a, b and c.

Its subcellular location is the cell inner membrane. Its function is as follows. Produces ATP from ADP in the presence of a proton gradient across the membrane. This Shewanella denitrificans (strain OS217 / ATCC BAA-1090 / DSM 15013) protein is ATP synthase epsilon chain.